Here is a 483-residue protein sequence, read N- to C-terminus: Serine/threonine-protein phosphatase 2A regulatory subunit phr2AB (483 aa).

WD repeat units lie at residues 22–61 (SDAN…QSSK) and 88–129 (EIEE…IKQV). The disordered stretch occupies residues 132–152 (SATTTGPSYNGSLASNNTRSP). 4 WD repeats span residues 206 to 244 (AHAY…ECFN), 255 to 295 (DLTE…LCDN), 314 to 352 (EIIS…KPVK), and 369 to 410 (ENDC…DVCL). Positions 421–443 (TKTLTTKMKLRSSKKEPKKPEDI) are disordered. Residues 433–443 (SKKEPKKPEDI) show a composition bias toward basic and acidic residues. One copy of the WD 7 repeat lies at 449–483 (EYTKKTLHCAWHPKDNLIAVGAANTVYLYAATENK).

Belongs to the phosphatase 2A regulatory subunit B family. PP2A consists of a trimeric holoenzyme, composed of a 37 kDa catalytic subunit (C subunit) and a 65 kDa constant regulatory subunit (A subunit), that associates with a variety of regulatory subunits (B subunit) such as phr2AB (B55) and psrA (B56 homolog). The trimer may partially dissociates into a core 'AC' dimer equally active compared to the trimer.

Its subcellular location is the cytoplasm. The protein resides in the cytosol. The protein localises to the cytoskeleton. It is found in the microtubule organizing center. It localises to the centrosome. Its function is as follows. The B regulatory subunit might modulate substrate selectivity and catalytic activity, and might also direct the localization of the catalytic enzyme to a particular subcellular compartment. In Dictyostelium discoideum (Social amoeba), this protein is Serine/threonine-protein phosphatase 2A regulatory subunit phr2AB (phr2aB).